Reading from the N-terminus, the 243-residue chain is Probable glycerol uptake facilitator protein (243 aa).

Transmembrane regions (helical) follow at residues 7-27 and 44-64; these read ILLG…GVCA and LLIA…SIQV. The short motif at 72–74 is the NPA 1 element; sequence NPA. 3 consecutive transmembrane segments (helical) span residues 88-108, 143-163, and 166-186; these read IGLL…AQII, ISYE…GDYH, and TGVF…GCAI. The NPA 2 signature appears at 187 to 189; the sequence is NPA. Residues 221 to 241 form a helical membrane-spanning segment; that stretch reads LVPLLAPIAAGLIMGGFSLLI.

It belongs to the MIP/aquaporin (TC 1.A.8) family.

The protein resides in the cell membrane. The enzyme catalyses glycerol(in) = glycerol(out). Functionally, mediates glycerol diffusion across the cytoplasmic membrane via a pore-type mechanism. The sequence is that of Probable glycerol uptake facilitator protein (glpF) from Mycoplasmoides gallisepticum (strain R(low / passage 15 / clone 2)) (Mycoplasma gallisepticum).